A 376-amino-acid chain; its full sequence is Queuine tRNA-ribosyltransferase (376 aa).

Catalysis depends on Asp89, which acts as the Proton acceptor. Substrate-binding positions include Asp89 to Phe93, Asp143, Gln194, and Gly221. Positions Gly252–Asn258 are RNA binding. Asp271 serves as the catalytic Nucleophile. An RNA binding; important for wobble base 34 recognition region spans residues Ala276 to Arg280. Residues Cys309, Cys311, Cys314, and His340 each contribute to the Zn(2+) site.

This sequence belongs to the queuine tRNA-ribosyltransferase family. Homodimer. Within each dimer, one monomer is responsible for RNA recognition and catalysis, while the other monomer binds to the replacement base PreQ1. Zn(2+) is required as a cofactor.

The catalysed reaction is 7-aminomethyl-7-carbaguanine + guanosine(34) in tRNA = 7-aminomethyl-7-carbaguanosine(34) in tRNA + guanine. Its pathway is tRNA modification; tRNA-queuosine biosynthesis. Functionally, catalyzes the base-exchange of a guanine (G) residue with the queuine precursor 7-aminomethyl-7-deazaguanine (PreQ1) at position 34 (anticodon wobble position) in tRNAs with GU(N) anticodons (tRNA-Asp, -Asn, -His and -Tyr). Catalysis occurs through a double-displacement mechanism. The nucleophile active site attacks the C1' of nucleotide 34 to detach the guanine base from the RNA, forming a covalent enzyme-RNA intermediate. The proton acceptor active site deprotonates the incoming PreQ1, allowing a nucleophilic attack on the C1' of the ribose to form the product. After dissociation, two additional enzymatic reactions on the tRNA convert PreQ1 to queuine (Q), resulting in the hypermodified nucleoside queuosine (7-(((4,5-cis-dihydroxy-2-cyclopenten-1-yl)amino)methyl)-7-deazaguanosine). The sequence is that of Queuine tRNA-ribosyltransferase from Clostridium botulinum (strain Hall / ATCC 3502 / NCTC 13319 / Type A).